A 992-amino-acid chain; its full sequence is Vacuolar membrane protease (992 aa).

Residues 1 to 24 are Cytoplasmic-facing; the sequence is MSPAMANPRVRKFNPIAFTPLPVT. Residues 25–45 form a helical membrane-spanning segment; the sequence is FITTIVYLAVLILVLVTYLVV. Over 46 to 390 the chain is Vacuolar; it reads PPAPTLEMSP…SAFAVFRLHT (345 aa). Residues Asn-59, Asn-115, and Asn-118 are each glycosylated (N-linked (GlcNAc...) asparagine). Positions 174 and 186 each coordinate Zn(2+). Residue Glu-220 is the Proton acceptor of the active site. A Zn(2+)-binding site is contributed by Glu-221. An N-linked (GlcNAc...) asparagine glycan is attached at Asn-237. Zn(2+)-binding residues include Glu-246 and His-319. The helical transmembrane segment at 391–411 threads the bilayer; sequence LFALSVTLLVIGPLVLFITSI. The Cytoplasmic segment spans residues 412-446; that stretch reads ALSKTDRMYLFSMSKSLGGASETVSLRGLRGLFRT. A helical transmembrane segment spans residues 447–467; sequence PIILTVTTVIPIGLAYLLEKI. The Vacuolar portion of the chain corresponds to 468–474; that stretch reads NPYIVHS. A helical transmembrane segment spans residues 475–495; it reads SQFAVWSMMLSVWIFVAWFLA. Residues 496–508 are Cytoplasmic-facing; the sequence is RVADFFRPSALHR. Residues 509-529 form a helical membrane-spanning segment; that stretch reads AYSYTWIFIVTWIMLVISTVY. Over 530–533 the chain is Vacuolar; that stretch reads ANQK. A helical membrane pass occupies residues 534–554; that stretch reads GIAAGYFTFFYFAAVFLATWV. Residues 555 to 671 lie on the Cytoplasmic side of the membrane; the sequence is SYLELFSLPR…WSWTLPRWTW (117 aa). Residues 579–620 form a disordered region; the sequence is RSSSLSSRLLTPSADELPSDIGPNGAENVGDPDETDPTESTS. The helical transmembrane segment at 672 to 692 threads the bilayer; the sequence is ILQLLLLAPIVIILVGQVGLL. Topologically, residues 693-708 are vacuolar; the sequence is LTTAMSQIGSDGVSTF. A helical transmembrane segment spans residues 709-729; that stretch reads IVYLACALFSTLLFAPLLPFI. Residues 730-736 lie on the Cytoplasmic side of the membrane; that stretch reads HRFTYHV. Residues 737 to 757 traverse the membrane as a helical segment; the sequence is PTFLLLIFIGTLIYNLVAFPF. At 758-992 the chain is on the vacuolar side; the sequence is SPANRLKIFF…VEASHDFIIQ (235 aa). 3 N-linked (GlcNAc...) asparagine glycosylation sites follow: Asn-805, Asn-846, and Asn-954.

This sequence belongs to the peptidase M28 family. Zn(2+) is required as a cofactor.

The protein localises to the vacuole membrane. Its function is as follows. May be involved in vacuolar sorting and osmoregulation. This chain is Vacuolar membrane protease, found in Paracoccidioides brasiliensis (strain Pb03).